We begin with the raw amino-acid sequence, 122 residues long: Large ribosomal subunit protein uL14 (122 aa).

The protein belongs to the universal ribosomal protein uL14 family. In terms of assembly, part of the 50S ribosomal subunit. Forms a cluster with proteins L3 and L19. In the 70S ribosome, L14 and L19 interact and together make contacts with the 16S rRNA in bridges B5 and B8.

Binds to 23S rRNA. Forms part of two intersubunit bridges in the 70S ribosome. The protein is Large ribosomal subunit protein uL14 of Borreliella afzelii (strain PKo) (Borrelia afzelii).